The chain runs to 333 residues: Holliday junction branch migration complex subunit RuvB (333 aa).

The large ATPase domain (RuvB-L) stretch occupies residues 1 to 182; the sequence is MEERIVSAEA…FGVMARLEYY (182 aa). ATP-binding positions include Leu21, Arg22, Gly63, Lys66, Thr67, Thr68, 129–131, Arg172, Tyr182, and Arg219; that span reads EDF. Residue Thr67 participates in Mg(2+) binding. The tract at residues 183-253 is small ATPAse domain (RuvB-S); it reads KPEELAQIVE…RACSALEQLH (71 aa). The segment at 256–333 is head domain (RuvB-H); that stretch reads PLGLDHIDDK…AHYGVEKQNG (78 aa). DNA-binding residues include Arg311 and Arg316.

It belongs to the RuvB family. As to quaternary structure, homohexamer. Forms an RuvA(8)-RuvB(12)-Holliday junction (HJ) complex. HJ DNA is sandwiched between 2 RuvA tetramers; dsDNA enters through RuvA and exits via RuvB. An RuvB hexamer assembles on each DNA strand where it exits the tetramer. Each RuvB hexamer is contacted by two RuvA subunits (via domain III) on 2 adjacent RuvB subunits; this complex drives branch migration. In the full resolvosome a probable DNA-RuvA(4)-RuvB(12)-RuvC(2) complex forms which resolves the HJ.

It localises to the cytoplasm. The catalysed reaction is ATP + H2O = ADP + phosphate + H(+). The RuvA-RuvB-RuvC complex processes Holliday junction (HJ) DNA during genetic recombination and DNA repair, while the RuvA-RuvB complex plays an important role in the rescue of blocked DNA replication forks via replication fork reversal (RFR). RuvA specifically binds to HJ cruciform DNA, conferring on it an open structure. The RuvB hexamer acts as an ATP-dependent pump, pulling dsDNA into and through the RuvAB complex. RuvB forms 2 homohexamers on either side of HJ DNA bound by 1 or 2 RuvA tetramers; 4 subunits per hexamer contact DNA at a time. Coordinated motions by a converter formed by DNA-disengaged RuvB subunits stimulates ATP hydrolysis and nucleotide exchange. Immobilization of the converter enables RuvB to convert the ATP-contained energy into a lever motion, pulling 2 nucleotides of DNA out of the RuvA tetramer per ATP hydrolyzed, thus driving DNA branch migration. The RuvB motors rotate together with the DNA substrate, which together with the progressing nucleotide cycle form the mechanistic basis for DNA recombination by continuous HJ branch migration. Branch migration allows RuvC to scan DNA until it finds its consensus sequence, where it cleaves and resolves cruciform DNA. The sequence is that of Holliday junction branch migration complex subunit RuvB from Shouchella clausii (strain KSM-K16) (Alkalihalobacillus clausii).